The primary structure comprises 464 residues: MLINRIEKDTIGEVELPKKCLWGSQTQRSIYNFNISTEKMPYELIHALVQIKLVAAKVNKDLKLLEEKKADAIIKASEEILSGKYKDSFPLVIWQTGSGTQTNMNVNEVIANIAIKLLGGKYGDYSIIHPNDHVNKSQSSNDVFPTAMHISAVLSLKKNLLPNLIKLKKSFYDKSILFKDIIKIGRTHLQDATPLTLGQEVSSWYCMLKKNIKYIKNSILCISEIALGGTAVGTGLNAHEKYSLKASKLLSEINKHNFISSTNKFESLSTCDAIVKVHSTLKNLSISIMKISNDIRWLSSGPRCGIGELIIPENEPGSSIMPGKVNPTQCESISMICCQVIGNDSAIGIGGLSGNFQLNVFRPMIIYNFLQSVRILSDGIKSFNKKCVIGIKPNIKRIKKFLKESLMLVTSLTPHIGYDKSAKIAKLAHNENITLKEACLKLNYISESQFDILVRPENMIGNKN.

Residues serine 98–threonine 100, histidine 129–aspartate 132, serine 139–asparagine 141, and threonine 187 each bind substrate. The Proton donor/acceptor role is filled by histidine 188. The active site involves serine 318. Residues serine 319 and lysine 324 to asparagine 326 each bind substrate.

Belongs to the class-II fumarase/aspartase family. Fumarase subfamily. Homotetramer.

The protein localises to the cytoplasm. The catalysed reaction is (S)-malate = fumarate + H2O. Its pathway is carbohydrate metabolism; tricarboxylic acid cycle; (S)-malate from fumarate: step 1/1. In terms of biological role, involved in the TCA cycle. Catalyzes the stereospecific interconversion of fumarate to L-malate. This is Fumarate hydratase class II from Wigglesworthia glossinidia brevipalpis.